The following is a 798-amino-acid chain: Heterogeneous nuclear ribonucleoprotein U (798 aa).

The residue at position 2 (Ser2) is an N-acetylserine. A Phosphoserine modification is found at Ser4. Positions 8–42 constitute an SAP domain; it reads VKKLKVSELKEELKKRRLSDKGLKADLMDRLQAAL. 2 positions are modified to N6-acetyllysine: Lys17 and Lys21. A disordered region spans residues 41–229; the sequence is ALDNEAGGRP…VKRPREDHGR (189 aa). Ser58 is subject to Phosphoserine. 2 stretches are compositionally biased toward low complexity: residues 71–80 and 103–113; these read AGLEQEAAAG and ENGAAGAADAG. 2 stretches are compositionally biased toward acidic residues: residues 114–128 and 134–147; these read AMEEEEAASEDENGD and EGEDELGDEEEGAG. Low complexity predominate over residues 153–169; sequence GEQQSQPPAAAQQASQQ. At Lys179 the chain carries N6-acetyllysine. The residue at position 180 (Ser180) is an ADP-ribosylserine. The span at 192–203 shows a compositional bias: low complexity; the sequence is APPGARQGQQQA. The span at 207-229 shows a compositional bias: basic and acidic residues; the sequence is GKTEQKAGDKKRGVKRPREDHGR. Arg229 carries the citrulline modification. The residue at position 239 (Lys239) is an N6-acetyllysine; alternate. A Glycyl lysine isopeptide (Lys-Gly) (interchain with G-Cter in SUMO1); alternate cross-link involves residue Lys239. A Glycyl lysine isopeptide (Lys-Gly) (interchain with G-Cter in SUMO2); alternate cross-link involves residue Lys239. Tyr240 bears the Phosphotyrosine mark. Phosphoserine occurs at positions 241 and 245. A B30.2/SPRY domain is found at 242–438; sequence RAKSPQPPVE…VEFNFGQKEK (197 aa). Thr260 carries the phosphothreonine modification. An N6-acetyllysine modification is found at Lys326. Positions 462–646 are ATPase domain; sequence PKGPEEKKDC…QKLLEQYKEE (185 aa). Residue Lys469 forms a Glycyl lysine isopeptide (Lys-Gly) (interchain with G-Cter in SUMO2) linkage. 478–485 lines the ATP pocket; that stretch reads GLPGAGKT. N6-acetyllysine; alternate occurs at positions 490 and 498. Glycyl lysine isopeptide (Lys-Gly) (interchain with G-Cter in SUMO2); alternate cross-links involve residues Lys490 and Lys498. Thr506 bears the Phosphothreonine mark. Lys510 is covalently cross-linked (Glycyl lysine isopeptide (Lys-Gly) (interchain with G-Cter in SUMO2)). At Lys525 the chain carries N6-acetyllysine. Lys539 bears the N6-acetyllysine; alternate mark. A Glycyl lysine isopeptide (Lys-Gly) (interchain with G-Cter in SUMO2); alternate cross-link involves residue Lys539. Lys548 participates in a covalent cross-link: Glycyl lysine isopeptide (Lys-Gly) (interchain with G-Cter in SUMO2). Thr556 carries the phosphothreonine modification. Residues Lys583 and Lys600 each participate in a glycyl lysine isopeptide (Lys-Gly) (interchain with G-Cter in SUMO2) cross-link. The actin-binding stretch occupies residues 585–600; the sequence is EDYKQRTQKKAEVEGK. At Lys609 the chain carries N6-acetyllysine; alternate. Lys609 participates in a covalent cross-link: Glycyl lysine isopeptide (Lys-Gly) (interchain with G-Cter in SUMO2); alternate. Positions 624-651 form a coiled coil; that stretch reads DEITYVELQKEEAQKLLEQYKEESKKAL. Residues Lys638 and Lys644 each participate in a glycyl lysine isopeptide (Lys-Gly) (interchain with G-Cter in SUMO2) cross-link. Basic and acidic residues predominate over residues 645 to 657; the sequence is EESKKALPPEKKQ. The interval 645–727 is disordered; it reads EESKKALPPE…GSGGIGYPYP (83 aa). Omega-N-methylarginine is present on Arg676. The span at 684–702 shows a compositional bias: gly residues; sequence GGFNMRGGNFRGGAPGNRG. The segment at 688–713 is RNA-binding RGG-box; sequence MRGGNFRGGAPGNRGGYNRRGNMPQR. Arg689, Arg694, and Arg701 each carry asymmetric dimethylarginine. Arg707 and Arg713 each carry asymmetric dimethylarginine; alternate. Omega-N-methylarginine; alternate occurs at positions 707 and 713. Positions 713-723 are enriched in gly residues; that stretch reads RGGGGGSGGIG. Residues Arg728 and Arg735 each carry the asymmetric dimethylarginine modification. The segment at 743–772 is disordered; sequence NYNRGGMPNRGNYNQNFRGRGNNRGYKNQS. Lys787 is modified (N6-acetyllysine; alternate). Residue Lys787 forms a Glycyl lysine isopeptide (Lys-Gly) (interchain with G-Cter in SUMO2); alternate linkage.

Oligomer (via ATPase domain and RNA-binding RGG-box region); oligomerization occurs upon ATP-binding in a chromatin-associated RNAs (caRNAs)- and transcription-dependent manner and is required for chromatin decompaction. ATP hydrolysis is required to cycle from an oligomeric to monomeric state to compact chromatin. Component of the coding region determinant (CRD)-mediated complex, composed of DHX9, HNRNPU, IGF2BP1, SYNCRIP and YBX1. Identified in the spliceosome C complex. Identified in a IGF2BP1-dependent mRNP granule complex containing untranslated mRNAs. Associates with heterogeneous nuclear ribonucleoprotein (hnRNP) particles. Associates (via middle region) with the C-terminal domain (CTD) RNA polymerase II (Pol II) holoenzyme; this association occurs in a RNA-independent manner. Associates (via middle region) with the core-TFIIH basal transcription factor complex; this association inhibits the CTD phosphorylation of RNA polymerase II holoenzyme by down-regulating TFIIH kinase activity. Associates with the telomerase holoenzyme complex. Associates with spindle microtubules (MTs) in a TPX2-dependent manner. Interacts (via C-terminus) with actin; this interaction is direct and mediates association with the phosphorylated CTD of RNA polymerase II and is disrupted in presence of the long non-coding H19 RNA. Interacts with AURKA. Interacts (via C-terminus) with CBX5; this interaction is, at least in part, RNA-dependent. Interacts with CR2. Interacts with CRY1. Interacts (via C-terminus) with EP300; this interaction enhances DNA-binding to nuclear scaffold/matrix attachment region (S/MAR) elements. Interacts with ERBB4. Interacts with GEMIN5. Interacts with IGF2BP1. Interacts with IGF2BP2 and IGF2BP3. Interacts with NCL; this interaction occurs during mitosis. Interacts (via C-terminus) with NR3C1 (via C-terminus). Interacts with PLK1; this interaction induces phosphorylation of HNRNPU at Ser-58 in mitosis. Interacts with POU3F4. Interacts with SMARCA4; this interaction occurs in embryonic stem cells and stimulates global Pol II-mediated transcription. Interacts (via C-terminus) with TOP2A; this interaction protects the topoisomerase TOP2A from degradation and positively regulates the relaxation of supercoiled DNA by TOP2A in a RNA-dependent manner. Interacts with TPX2; this interaction recruits HNRNPU to spindle microtubules (MTs). Interacts with UBQLN2. Interacts (via RNA-binding RGG-box region) with ZBTB7B; the interaction facilitates the recruitment of long non-coding RNA Blnc1 by ZBTB7B. Interacts with ERCC6. Cleaved at Asp-94 by CASP3 during T-cell apoptosis, resulting in a loss of DNA- and chromatin-binding activities. In terms of processing, extensively phosphorylated. Phosphorylated on Ser-58 by PLK1 and dephosphorylated by protein phosphatase 2A (PP2A) in mitosis. Post-translationally, arg-707 and Arg-713 are dimethylated, probably to asymmetric dimethylarginine. Citrullinated by PADI4.

It is found in the nucleus. Its subcellular location is the nucleus matrix. The protein resides in the chromosome. The protein localises to the nucleus speckle. It localises to the cytoplasm. It is found in the cytoskeleton. Its subcellular location is the microtubule organizing center. The protein resides in the centrosome. The protein localises to the centromere. It localises to the kinetochore. It is found in the spindle. Its subcellular location is the spindle pole. The protein resides in the midbody. The protein localises to the cell surface. It localises to the cytoplasmic granule. Its function is as follows. DNA- and RNA-binding protein involved in several cellular processes such as nuclear chromatin organization, telomere-length regulation, transcription, mRNA alternative splicing and stability, Xist-mediated transcriptional silencing and mitotic cell progression. Plays a role in the regulation of interphase large-scale gene-rich chromatin organization through chromatin-associated RNAs (caRNAs) in a transcription-dependent manner, and thereby maintains genomic stability. Required for the localization of the long non-coding Xist RNA on the inactive chromosome X (Xi) and the subsequent initiation and maintenance of X-linked transcriptional gene silencing during X-inactivation. Required for the topoisomerase TOP2A protein stability and activity in a RNA-dependent manner. Plays a role as a RNA polymerase II (Pol II) holoenzyme transcription regulator. Promotes transcription initiation by direct association with the core-TFIIH basal transcription factor complex for the assembly of a functional pre-initiation complex with Pol II in a actin-dependent manner. Blocks Pol II transcription elongation activity by inhibiting the C-terminal domain (CTD) phosphorylation of Pol II and dissociates from Pol II pre-initiation complex prior to productive transcription elongation. Positively regulates CBX5-induced transcriptional gene silencing and retention of CBX5 in the nucleus. Negatively regulates glucocorticoid-mediated transcriptional activation. Key regulator of transcription initiation and elongation in embryonic stem cells upon leukemia inhibitory factor (LIF) signaling. Involved in the long non-coding RNA H19-mediated Pol II transcriptional repression. Participates in the circadian regulation of the core clock component BMAL1 transcription. Plays a role in the regulation of telomere length. Plays a role as a global pre-mRNA alternative splicing modulator by regulating U2 small nuclear ribonucleoprotein (snRNP) biogenesis. Plays a role in mRNA stability. Component of the CRD-mediated complex that promotes MYC mRNA stabilization. Enhances the expression of specific genes, such as tumor necrosis factor TNFA, by regulating mRNA stability, possibly through binding to the 3'-untranslated region (UTR). Plays a role in mitotic cell cycle regulation. Involved in the formation of stable mitotic spindle microtubules (MTs) attachment to kinetochore, spindle organization and chromosome congression. Phosphorylation at Ser-58 by PLK1 is required for chromosome alignement and segregation and progression through mitosis. Also contributes to the targeting of AURKA to mitotic spindle MTs. Binds to double- and single-stranded DNA and RNA, poly(A), poly(C) and poly(G) oligoribonucleotides. Binds to chromatin-associated RNAs (caRNAs). Associates with chromatin to scaffold/matrix attachment region (S/MAR) elements in DNA. Associates with chromatin in a chromatin-associated RNAs (caRNAs)-dependent manner. Binds to the Xist RNA. Binds the long non-coding H19 RNA. Binds to SMN1/2 pre-mRNAs at G/U-rich regions. Binds to small nuclear RNAs (snRNAs). Binds to the 3'-UTR of TNFA mRNA. Binds (via RNA-binding RGG-box region) to the long non-coding Xist RNA; this binding is direct and bridges the Xist RNA and the inactive chromosome X (Xi). Also negatively regulates embryonic stem cell differentiation upon LIF signaling. Required for embryonic development. Binds to brown fat long non-coding RNA 1 (Blnc1); facilitates the recruitment of Blnc1 by ZBTB7B required to drive brown and beige fat development and thermogenesis. This chain is Heterogeneous nuclear ribonucleoprotein U, found in Rattus norvegicus (Rat).